Here is a 1475-residue protein sequence, read N- to C-terminus: Peroxidasin homolog (1475 aa).

The N-terminal stretch at 1-23 (MAVRPTRRCLLALLLCFAWWAMA) is a signal peptide. The LRRNT domain occupies 24–60 (VVASKQGAGCPSRCLCFRTTVRCMHLLLEAVPAVAPQ). 2 disulfides stabilise this stretch: cysteine 33-cysteine 39 and cysteine 37-cysteine 46. LRR repeat units lie at residues 58-81 (APQT…AFRR), 82-105 (LRSL…AFED), 107-129 (ENLK…AFKG), 130-153 (LASL…SFQH), 154-177 (LPKL…TFSQ), and 179-201 (ESMK…LWLA). In terms of domain architecture, LRRCT spans 189-241 (NALHCDCEILWLADLLKTYAQSGNAQAAATCEYPRRIQGRSVATITPEELNCE). Intrachain disulfides connect cysteine 193–cysteine 240, cysteine 195–cysteine 219, cysteine 264–cysteine 314, cysteine 360–cysteine 409, cysteine 451–cysteine 499, and cysteine 543–cysteine 591. Ig-like C2-type domains follow at residues 243-329 (PRIT…QEVT), 339-425 (PTFV…AFII), 430-517 (PQFT…LTVQ), and 518-607 (PRVT…MVLS). Asparagine 387 carries an N-linked (GlcNAc...) asparagine glycan. Residues 402–425 (SDSGEYTCFASNSVDSIHATAFII) form an LRR 7 repeat. N-linked (GlcNAc...) asparagine glycans are attached at residues asparagine 637, asparagine 696, asparagine 716, and asparagine 728. 4 cysteine pairs are disulfide-bonded: cysteine 720–cysteine 882, cysteine 729–cysteine 745, cysteine 844–cysteine 854, and cysteine 848–cysteine 872. Aspartate 823 is a binding site for heme b. Histidine 824 functions as the Proton acceptor in the catalytic mechanism. Ca(2+) is bound at residue aspartate 825. Ca(2+) is bound by residues threonine 904, tyrosine 906, aspartate 908, and serine 910. A disulfide bond links cysteine 956 and cysteine 967. N-linked (GlcNAc...) asparagine glycosylation occurs at asparagine 961. Heme b-binding residues include glutamate 977 and histidine 1071. One copy of the LRR 8 repeat lies at 1148–1172 (ALDLAAINIQRGRDHGIPPYHDYRV). Phosphotyrosine is present on tyrosine 1173. 2 cysteine pairs are disulfide-bonded: cysteine 1174/cysteine 1231 and cysteine 1272/cysteine 1298. The N-linked (GlcNAc...) asparagine glycan is linked to asparagine 1175. The residue at position 1177 (serine 1177) is a Phosphoserine. The stretch at 1267-1288 (LARILCDNSDNITRVQQDVFRV) is one LRR 9 repeat. N-linked (GlcNAc...) asparagine glycosylation is found at asparagine 1277 and asparagine 1364. The required in homotrimerization stretch occupies residues 1312–1407 (CCEDCRTRGQ…QINSLESRLS (96 aa)). In terms of domain architecture, VWFC spans 1409-1467 (TECVDDSGESHGGNTKWKKDPCTVCECKNGQITCFVEACQPAACPQPVKVEGACCPVCL).

Belongs to the peroxidase family. XPO subfamily. Homotrimer; disulfide-linked. The homotrimer form is predominant. Homooligomer; disulfide-linked. Oligomerization occurs intracellularly before C-terminal proteolytic cleavage. Interacts with PXDNL; this interaction inhibits the peroxidase activity of PXDN. Requires Ca(2+) as cofactor. The cofactor is heme b. Processed by FURIN and the proteolytic processing largely depends on the peroxidase activity of PXDN. The proteolytic cleavage occurs after intracellular homotrimerization and releases into the extracellular matrix a large, catalytically active fragment and a smaller fragment consisting primarily of the C-terminal VWFC domain. The processing enhances both peroxidase activity and sulfilimine cross-links formation. In terms of tissue distribution, highly expressed in the cardiovascular system. In the embryo, expressed in the corneal epithelial layer. In the adult eyes, expressed in the corneal and lens epithelium. Expressed in lung.

Its subcellular location is the secreted. It localises to the extracellular space. It is found in the extracellular matrix. The protein resides in the endoplasmic reticulum. The protein localises to the cell surface. Its subcellular location is the basement membrane. It carries out the reaction L-lysyl-[collagen] + L-methionyl-[collagen] + H2O2 = [collagen]-L-lysyl-N-S-L-methionyl-[collagen] + 2 H2O + H(+). It catalyses the reaction bromide + H2O2 = hypobromite + H2O. The catalysed reaction is L-lysyl-[collagen] + L-methionyl-[collagen] + hypobromite = [collagen]-L-lysyl-N-S-L-methionyl-[collagen] + bromide + H2O + H(+). The enzyme catalyses (5R)-5-hydroxy-L-lysyl-[collagen] + L-methionyl-[collagen] + hypobromite = [collagen]-(5R)-5-hydroxy-L-lysyl-N-S-L-methionyl-[collagen] + bromide + H2O + H(+). It carries out the reaction (5R)-5-hydroxy-L-lysyl-[collagen] + L-methionyl-[collagen] + H2O2 = [collagen]-(5R)-5-hydroxy-L-lysyl-N-S-L-methionyl-[collagen] + 2 H2O + H(+). It catalyses the reaction L-tyrosyl-[protein] + bromide + H2O2 + H(+) = 3-bromo-L-tyrosyl-[protein] + 2 H2O. The catalysed reaction is hypobromite + L-tyrosyl-[protein] + H(+) = 3-bromo-L-tyrosyl-[protein] + H2O. Thiocyanate inhibits the formation of 3-bromotyrosine. Catalyzes the two-electron oxidation of bromide by hydrogen peroxide and generates hypobromite as a reactive intermediate which mediates the formation of sulfilimine cross-links between methionine and hydroxylysine residues within an uncross-linked collagen IV/COL4A1 NC1 hexamer. In turns, directly contributes to the collagen IV network-dependent fibronectin/FN and laminin assembly, which is required for full extracellular matrix (ECM)-mediated signaling. Thus, sulfilimine cross-links are essential for growth factor-induced cell proliferation and survival in endothelial cells, an event essential to basement membrane integrity. In addition, through the bromide oxidation, may promote tubulogenesis and induce angiogenesis through ERK1/2, Akt, and FAK pathways. Moreover brominates alpha2 collagen IV chain/COL4A2 at 'Tyr-1480' and leads to bromine enrichment of the basement membranes. In vitro, can also catalyze the two-electron oxidation of thiocyanate and iodide and these two substrates could effectively compete with bromide and thus inhibit the formation of sulfilimine bonds. Binds laminins. May play a role in the organization of eyeball structure and lens development during eye development. The chain is Peroxidasin homolog from Mus musculus (Mouse).